The primary structure comprises 265 residues: MLRVAGRRLSSSAARSSSTFFTRSSFTVTDDSSPARSPSPSLTSSFLDQIRGFSSNSVSPAHQLGLVSDLPATVAAIKNPSSKIVYDDSNHERYPPGDPSKRAFAYFVLTGGRFVYASSVRLLILKFVLSMSASKDVLALASLEVDLSSIEPGSTVTVKWRGKPVFIRRRTDDDIKLANSVDLGTLRDPQQDAERVKNPEWLVVVGVCTHLGCIPLPNAGDFGGWFCPCHGSHYDISGRIRKGPAPYNLEVPTYSFLEENKLLIG.

A mitochondrion-targeting transit peptide spans 1 to 53 (MLRVAGRRLSSSAARSSSTFFTRSSFTVTDDSSPARSPSPSLTSSFLDQIRGF). Over 54–102 (SSNSVSPAHQLGLVSDLPATVAAIKNPSSKIVYDDSNHERYPPGDPSKR) the chain is Mitochondrial matrix. The chain crosses the membrane as a helical span at residues 103 to 125 (AFAYFVLTGGRFVYASSVRLLIL). Topologically, residues 126–265 (KFVLSMSASK…FLEENKLLIG (140 aa)) are mitochondrial intermembrane. In terms of domain architecture, Rieske spans 175–263 (IKLANSVDLG…YSFLEENKLL (89 aa)). Residues C208, H210, C227, and H230 each coordinate [2Fe-2S] cluster. A disulfide bridge links C213 with C229.

Belongs to the Rieske iron-sulfur protein family. In terms of assembly, component of the ubiquinol-cytochrome c oxidoreductase (cytochrome b-c1 complex, complex III, CIII), a multisubunit enzyme composed of 3 respiratory subunits cytochrome b, cytochrome c1 and Rieske protein, 2 core protein subunits, and several low-molecular weight protein subunits. The complex exists as an obligatory dimer and forms supercomplexes (SCs) in the inner mitochondrial membrane with cytochrome c oxidase (complex IV, CIV). Requires [2Fe-2S] cluster as cofactor.

It is found in the mitochondrion inner membrane. It catalyses the reaction a quinol + 2 Fe(III)-[cytochrome c](out) = a quinone + 2 Fe(II)-[cytochrome c](out) + 2 H(+)(out). Component of the ubiquinol-cytochrome c oxidoreductase, a multisubunit transmembrane complex that is part of the mitochondrial electron transport chain which drives oxidative phosphorylation. The respiratory chain contains 3 multisubunit complexes succinate dehydrogenase (complex II, CII), ubiquinol-cytochrome c oxidoreductase (cytochrome b-c1 complex, complex III, CIII) and cytochrome c oxidase (complex IV, CIV), that cooperate to transfer electrons derived from NADH and succinate to molecular oxygen, creating an electrochemical gradient over the inner membrane that drives transmembrane transport and the ATP synthase. The cytochrome b-c1 complex catalyzes electron transfer from ubiquinol to cytochrome c, linking this redox reaction to translocation of protons across the mitochondrial inner membrane, with protons being carried across the membrane as hydrogens on the quinol. In the process called Q cycle, 2 protons are consumed from the matrix, 4 protons are released into the intermembrane space and 2 electrons are passed to cytochrome c. The Rieske protein is a catalytic core subunit containing a [2Fe-2S] iron-sulfur cluster. It cycles between 2 conformational states during catalysis to transfer electrons from the quinol bound in the Q(0) site in cytochrome b to cytochrome c1. The chain is Cytochrome b-c1 complex subunit Rieske, mitochondrial (FES1) from Solanum tuberosum (Potato).